Consider the following 344-residue polypeptide: Serine proteinase inhibitor 2 (344 aa).

The protein belongs to the serpin family. Poxviruses subfamily.

The protein resides in the host cytoplasm. Viral serpin that inhibits both cysteine and serine proteinases involved in the regulation of host inflammatory and apoptosis processes. Major anti-apoptotic protein which inhibits both intrinsic and extrinsic pathways and strongly cleaves host CASP1 and CASP8 but is a rather poor inhibitor of host CASP3. Prevents the proteolytic activity of host interleukin-1-beta converting enzyme (ICE) and ICE-like enzymes. Can also block apoptosis through host tumor necrosis factor (TNF) receptor. The inhibition of host ICE is an example of a 'cross-class' interaction, in which a serpin inhibits a non-serine proteinase. Also inhibits granzyme B. The protein is Serine proteinase inhibitor 2 (OPG199) of Homo sapiens (Human).